Consider the following 852-residue polypeptide: Replication factor C small subunit (852 aa).

Positions 183–306 constitute a DOD-type homing endonuclease domain; the sequence is WLGYFMGSGY…IAYALASFGI (124 aa).

This sequence belongs to the activator 1 small subunits family. RfcS subfamily. As to quaternary structure, heteromultimer composed of three to four small subunits (RfcS) and one to two large subunits (RfcL). Post-translationally, this protein undergoes a protein self splicing that involves a post-translational excision of the intervening region (intein) followed by peptide ligation.

In terms of biological role, part of the RFC clamp loader complex which loads the PCNA sliding clamp onto DNA. The complex possesses DNA-dependent ATPase activity which is further stimulated by PCNA. In Pyrococcus furiosus (strain ATCC 43587 / DSM 3638 / JCM 8422 / Vc1), this protein is Replication factor C small subunit (rfcS).